The following is a 248-amino-acid chain: MICTFLRAVQYTEKLHRSSAKRLLLPYIVLNKACLKTEPSLRCGLQYQKKTLRPRCILGVTQKTIWTQGPSPRKAKEDGSKQVSVHRSQRGGTAVPTSQKVKEAGRDFTYLIVVLFGISITGGLFYTIFKELFSSSSPSKIYGRALEKCRSHPEVIGVFGESVKGYGEVTRRGRRQHVRFTEYVKDGLKHTCVKFYIEGSEPGKQGTVYAQVKENPGSGEYDFRYIFVEIESYPRRTIIIEDNRSQDD.

The N-terminal 18 residues, Met1 to Ser18, are a transit peptide targeting the mitochondrion. The interval Thr67–Ser98 is disordered. The chain crosses the membrane as a helical span at residues Phe108–Ile128.

This sequence belongs to the TIM21 family. Component of the TIM23 complex. Component of the MITRAC (mitochondrial translation regulation assembly intermediate of cytochrome c oxidase complex) complex, the core components of this complex being COA3/MITRAC12 and COX14. Interacts with COA3 and MT-CO1/COX1.

Its subcellular location is the mitochondrion membrane. In terms of biological role, participates in the translocation of transit peptide-containing proteins across the mitochondrial inner membrane. Also required for assembly of mitochondrial respiratory chain complex I and complex IV as component of the MITRAC (mitochondrial translation regulation assembly intermediate of cytochrome c oxidase complex) complex. Probably shuttles between the presequence translocase and respiratory-chain assembly intermediates in a process that promotes incorporation of early nuclear-encoded subunits into these complexes. The polypeptide is Mitochondrial import inner membrane translocase subunit Tim21 (TIMM21) (Homo sapiens (Human)).